We begin with the raw amino-acid sequence, 384 residues long: MKFIDEAKIEVAAGKGGNGATSFRREKFVPRGGPDGGDGGKGGSVWAEADENTNTLVEYRFVKRYQAKNGEKGHGSDRYGAGADDIVLKMPVGTLIRDLDTDEIVADLTYHGQRVCLAKGGKGGLGHIHFKSSVNRAPKQSTPGEEGETRSLQLELKVLADVGLLGMPNAGKSTLITAVSAARPKIANYPFTTLHPNLGVVRIDENHSFVMADIPGLIEGAAEGAGLGHRFLKHLSRTGLLLHVVDLAPFDEAVDPAEEALAIINELRKYDEELYGKPRWLVLNKLDMLDEEEAQERTVTFLEAVGWDYPKPDDRFQFDMETPRLFQISALTHQGTQELVHQINQYLTEKKRLEAEKAEAEKAAANVEIIEQQPKTDTGVFKPE.

Residues 1-159 (MKFIDEAKIE…RSLQLELKVL (159 aa)) form the Obg domain. The tract at residues 20 to 46 (ATSFRREKFVPRGGPDGGDGGKGGSVW) is disordered. Over residues 33–43 (GPDGGDGGKGG) the composition is skewed to gly residues. Positions 160 to 348 (ADVGLLGMPN…LVHQINQYLT (189 aa)) constitute an OBG-type G domain. GTP contacts are provided by residues 166 to 173 (GMPNAGKS), 191 to 195 (FTTLH), 213 to 216 (DIPG), 284 to 287 (NKLD), and 329 to 331 (SAL). Ser-173 and Thr-193 together coordinate Mg(2+).

This sequence belongs to the TRAFAC class OBG-HflX-like GTPase superfamily. OBG GTPase family. In terms of assembly, monomer. Mg(2+) is required as a cofactor.

The protein localises to the cytoplasm. Its function is as follows. An essential GTPase which binds GTP, GDP and possibly (p)ppGpp with moderate affinity, with high nucleotide exchange rates and a fairly low GTP hydrolysis rate. Plays a role in control of the cell cycle, stress response, ribosome biogenesis and in those bacteria that undergo differentiation, in morphogenesis control. The sequence is that of GTPase Obg from Neisseria meningitidis serogroup C (strain 053442).